The following is a 101-amino-acid chain: Small ribosomal subunit protein uS14 (101 aa).

Belongs to the universal ribosomal protein uS14 family. In terms of assembly, part of the 30S ribosomal subunit. Contacts proteins S3 and S10.

Its function is as follows. Binds 16S rRNA, required for the assembly of 30S particles and may also be responsible for determining the conformation of the 16S rRNA at the A site. This is Small ribosomal subunit protein uS14 from Neisseria meningitidis serogroup C / serotype 2a (strain ATCC 700532 / DSM 15464 / FAM18).